The following is a 283-amino-acid chain: MTVAKAIFIKCGNLGTSMMMDMLLDERADREDVEFRVVGTSVKMDPECVEAAVEMALDIAEDFEPDFIVYGGPNPAAPGPSKAREMLADSEYPAVIIGDAPGLKVKDEMEEQGLGYILVKPDAMLGARREFLDPVEMAIYNADLMKVLAATGVFRVVQEAFDELIEKAKEDEISENDLPKLVIDRNTLLEREEFENPYAMVKAMAALEIAENVADVSVEGCFVEQDKERYVPIVASAHEMMRKAAELADEARELEKSNDAVLRTPHAPDGKVLSKRKFMEDPE.

The tract at residues 255-283 is disordered; sequence EKSNDAVLRTPHAPDGKVLSKRKFMEDPE.

Belongs to the MTD family. In terms of assembly, homohexamer composed of a trimer of dimers.

It catalyses the reaction 5,10-methylenetetrahydromethanopterin + oxidized coenzyme F420-(gamma-L-Glu)(n) + 2 H(+) = 5,10-methenyl-5,6,7,8-tetrahydromethanopterin + reduced coenzyme F420-(gamma-L-Glu)(n). The protein operates within one-carbon metabolism; methanogenesis from CO(2); 5,10-methylene-5,6,7,8-tetrahydromethanopterin from 5,10-methenyl-5,6,7,8-tetrahydromethanopterin (coenzyme F420 route): step 1/1. With respect to regulation, strictly dependent on the presence of salts for activity. Its function is as follows. Catalyzes the reversible reduction of methenyl-H(4)MPT(+) to methylene-H(4)MPT. The sequence is that of F420-dependent methylenetetrahydromethanopterin dehydrogenase (mtd) from Methanopyrus kandleri (strain AV19 / DSM 6324 / JCM 9639 / NBRC 100938).